Here is a 335-residue protein sequence, read N- to C-terminus: Mycobacterial beta-ketoacyl-[acyl-carrier-protein] synthase III (335 aa).

Catalysis depends on residues Cys-122 and His-258. Residues 259-263 (QANSR) form an ACP-binding region. The active site involves Asn-289.

This sequence belongs to the thiolase-like superfamily. FabH family. As to quaternary structure, homodimer.

Its subcellular location is the cytoplasm. It catalyses the reaction malonyl-[ACP] + dodecanoyl-CoA + H(+) = 3-oxotetradecanoyl-[ACP] + CO2 + CoA. Its pathway is lipid metabolism; fatty acid biosynthesis. It functions in the pathway lipid metabolism; mycolic acid biosynthesis. Its function is as follows. Catalyzes the condensation reaction of fatty acid synthesis by the addition to an acyl acceptor of two carbons from malonyl-ACP. Catalyzes the first condensation reaction which initiates fatty acid synthesis and may therefore play a role in governing the total rate of fatty acid production. Possesses both acetoacetyl-ACP synthase and acetyl transacylase activities. Its substrate specificity determines the biosynthesis of branched-chain and/or straight-chain of fatty acids. The sequence is that of Mycobacterial beta-ketoacyl-[acyl-carrier-protein] synthase III from Mycobacterium bovis (strain ATCC BAA-935 / AF2122/97).